Consider the following 355-residue polypeptide: UDP-3-O-acylglucosamine N-acyltransferase (355 aa).

Histidine 248 (proton acceptor) is an active-site residue.

This sequence belongs to the transferase hexapeptide repeat family. LpxD subfamily. Homotrimer.

It catalyses the reaction a UDP-3-O-[(3R)-3-hydroxyacyl]-alpha-D-glucosamine + a (3R)-hydroxyacyl-[ACP] = a UDP-2-N,3-O-bis[(3R)-3-hydroxyacyl]-alpha-D-glucosamine + holo-[ACP] + H(+). It functions in the pathway bacterial outer membrane biogenesis; LPS lipid A biosynthesis. Its function is as follows. Catalyzes the N-acylation of UDP-3-O-acylglucosamine using 3-hydroxyacyl-ACP as the acyl donor. Is involved in the biosynthesis of lipid A, a phosphorylated glycolipid that anchors the lipopolysaccharide to the outer membrane of the cell. The sequence is that of UDP-3-O-acylglucosamine N-acyltransferase from Synechococcus elongatus (strain ATCC 33912 / PCC 7942 / FACHB-805) (Anacystis nidulans R2).